Here is a 191-residue protein sequence, read N- to C-terminus: Vascular endothelial growth factor A (191 aa).

An N-terminal signal peptide occupies residues 1-26 (MNFLLTWIHWGLAALLYFHNAKVLQA). Intrachain disulfides connect Cys52–Cys94, Cys83–Cys128, and Cys87–Cys130. Asn101 carries N-linked (GlcNAc...) asparagine glycosylation.

This sequence belongs to the PDGF/VEGF growth factor family. As to quaternary structure, homodimer; disulfide-linked. Also found as heterodimer with PGF. In terms of tissue distribution, expressed by the venom gland, and probably other tissues.

It is found in the secreted. In terms of biological role, growth factor active in angiogenesis, vasculogenesis and endothelial cell growth. Induces endothelial cell proliferation, promotes cell migration, inhibits apoptosis and induces permeabilization of blood vessels. Binds to heparan sulfate and heparin. This is Vascular endothelial growth factor A from Bitis gabonica (Gaboon adder).